The sequence spans 205 residues: Meiotic nuclear division protein 1 homolog (205 aa).

An N-acetylserine modification is found at Ser2. A coiled-coil region spans residues 83 to 173; that stretch reads KRKLEVLDSQ…EAANRWTDNI (91 aa).

This sequence belongs to the MND1 family. In terms of assembly, heterodimer with PSMC3IP/HOP2. MND1-PSMC3IP interacts with DMC1 and RAD51 and binds preferentially to dsDNA.

Its subcellular location is the nucleus. In terms of biological role, required for proper homologous chromosome pairing and efficient cross-over and intragenic recombination during meiosis. Stimulates both DMC1- and RAD51-mediated homologous strand assimilation, which is required for the resolution of meiotic double-strand breaks. This chain is Meiotic nuclear division protein 1 homolog, found in Bos taurus (Bovine).